A 246-amino-acid polypeptide reads, in one-letter code: 1-(5-phosphoribosyl)-5-[(5-phosphoribosylamino)methylideneamino] imidazole-4-carboxamide isomerase (246 aa).

Asp-8 (proton acceptor) is an active-site residue. Residue Asp-130 is the Proton donor of the active site.

This sequence belongs to the HisA/HisF family.

Its subcellular location is the cytoplasm. The catalysed reaction is 1-(5-phospho-beta-D-ribosyl)-5-[(5-phospho-beta-D-ribosylamino)methylideneamino]imidazole-4-carboxamide = 5-[(5-phospho-1-deoxy-D-ribulos-1-ylimino)methylamino]-1-(5-phospho-beta-D-ribosyl)imidazole-4-carboxamide. The protein operates within amino-acid biosynthesis; L-histidine biosynthesis; L-histidine from 5-phospho-alpha-D-ribose 1-diphosphate: step 4/9. The sequence is that of 1-(5-phosphoribosyl)-5-[(5-phosphoribosylamino)methylideneamino] imidazole-4-carboxamide isomerase from Alcanivorax borkumensis (strain ATCC 700651 / DSM 11573 / NCIMB 13689 / SK2).